The sequence spans 266 residues: Ribosomal RNA small subunit methyltransferase J (266 aa).

S-adenosyl-L-methionine contacts are provided by residues 109 to 110, 125 to 126, and Asp-185; these read RD and ER.

This sequence belongs to the methyltransferase superfamily. RsmJ family.

The protein resides in the cytoplasm. The catalysed reaction is guanosine(1516) in 16S rRNA + S-adenosyl-L-methionine = N(2)-methylguanosine(1516) in 16S rRNA + S-adenosyl-L-homocysteine + H(+). Its function is as follows. Specifically methylates the guanosine in position 1516 of 16S rRNA. The protein is Ribosomal RNA small subunit methyltransferase J of Cellvibrio japonicus (strain Ueda107) (Pseudomonas fluorescens subsp. cellulosa).